A 624-amino-acid chain; its full sequence is Chaperone protein HtpG (624 aa).

Residues methionine 1 to arginine 336 form an a; substrate-binding region. The interval glutamate 337–lysine 552 is b. The segment at leucine 553–serine 624 is c.

It belongs to the heat shock protein 90 family. In terms of assembly, homodimer.

The protein localises to the cytoplasm. In terms of biological role, molecular chaperone. Has ATPase activity. The polypeptide is Chaperone protein HtpG (Cronobacter sakazakii (strain ATCC BAA-894) (Enterobacter sakazakii)).